We begin with the raw amino-acid sequence, 860 residues long: DNA mismatch repair protein MutS (860 aa).

607 to 614 (GPNMSGKS) serves as a coordination point for ATP.

It belongs to the DNA mismatch repair MutS family.

This protein is involved in the repair of mismatches in DNA. It is possible that it carries out the mismatch recognition step. This protein has a weak ATPase activity. The polypeptide is DNA mismatch repair protein MutS (Listeria monocytogenes serovar 1/2a (strain ATCC BAA-679 / EGD-e)).